The sequence spans 305 residues: Oxygen-dependent coproporphyrinogen-III oxidase (305 aa).

Substrate is bound at residue S92. H96 and H106 together coordinate a divalent metal cation. H106 serves as the catalytic Proton donor. A substrate-binding site is contributed by 108–110 (NVR). Residues H145 and H175 each contribute to the a divalent metal cation site. The interval 239-274 (YVEFNLLFDRGTLFGLQSGGRAESILISLPPLVRWE) is important for dimerization. 257 to 259 (GGR) serves as a coordination point for substrate.

This sequence belongs to the aerobic coproporphyrinogen-III oxidase family. As to quaternary structure, homodimer. A divalent metal cation is required as a cofactor.

Its subcellular location is the cytoplasm. It catalyses the reaction coproporphyrinogen III + O2 + 2 H(+) = protoporphyrinogen IX + 2 CO2 + 2 H2O. It functions in the pathway porphyrin-containing compound metabolism; protoporphyrin-IX biosynthesis; protoporphyrinogen-IX from coproporphyrinogen-III (O2 route): step 1/1. Its function is as follows. Involved in the heme biosynthesis. Catalyzes the aerobic oxidative decarboxylation of propionate groups of rings A and B of coproporphyrinogen-III to yield the vinyl groups in protoporphyrinogen-IX. In Xylella fastidiosa (strain M12), this protein is Oxygen-dependent coproporphyrinogen-III oxidase.